The following is a 221-amino-acid chain: MNWSIPNILTVLRLLAAPGVAVMFLYFHRPWADWFALTLFILAAVTDFFDGYLARLWKQESKFGAMLDPIADKAMVVIALVIITGYSGMNPWLILPVTLILFREVFVSGLREFLGAKASLLKVTKLAKWKTTAQMVAIAILFLGTGLEHLEGIARQGMTWEQYARAVSAGEADPIRSCGMHGCSSYATWLGLALIWIAAALTFITGWDYFRKALPYLKDEK.

Helical transmembrane passes span 8–28 (ILTVLRLLAAPGVAVMFLYFH), 34–54 (WFALTLFILAAVTDFFDGYLA), 75–95 (MVVIALVIITGYSGMNPWLIL), 133–153 (AQMVAIAILFLGTGLEHLEGI), and 187–207 (ATWLGLALIWIAAALTFITGW).

Belongs to the CDP-alcohol phosphatidyltransferase class-I family.

Its subcellular location is the cell membrane. It catalyses the reaction a CDP-1,2-diacyl-sn-glycerol + sn-glycerol 3-phosphate = a 1,2-diacyl-sn-glycero-3-phospho-(1'-sn-glycero-3'-phosphate) + CMP + H(+). It functions in the pathway phospholipid metabolism; phosphatidylglycerol biosynthesis; phosphatidylglycerol from CDP-diacylglycerol: step 1/2. In terms of biological role, this protein catalyzes the committed step to the synthesis of the acidic phospholipids. The sequence is that of CDP-diacylglycerol--glycerol-3-phosphate 3-phosphatidyltransferase (pgsA) from Cereibacter sphaeroides (strain ATCC 17023 / DSM 158 / JCM 6121 / CCUG 31486 / LMG 2827 / NBRC 12203 / NCIMB 8253 / ATH 2.4.1.) (Rhodobacter sphaeroides).